The sequence spans 309 residues: Homoserine O-acetyltransferase (309 aa).

The active-site Acyl-thioester intermediate is cysteine 148. 2 residues coordinate substrate: lysine 169 and serine 198. Histidine 241 acts as the Proton acceptor in catalysis. Residue glutamate 243 is part of the active site. Arginine 255 contacts substrate.

The protein belongs to the MetA family.

The protein resides in the cytoplasm. It carries out the reaction L-homoserine + acetyl-CoA = O-acetyl-L-homoserine + CoA. Its pathway is amino-acid biosynthesis; L-methionine biosynthesis via de novo pathway; O-acetyl-L-homoserine from L-homoserine: step 1/1. Transfers an acetyl group from acetyl-CoA to L-homoserine, forming acetyl-L-homoserine. In vitro, can also use propionyl-CoA as acyl donor. The sequence is that of Homoserine O-acetyltransferase from Shouchella clausii (Alkalihalobacillus clausii).